A 186-amino-acid polypeptide reads, in one-letter code: Ribosome-recycling factor (186 aa).

Belongs to the RRF family.

It is found in the cytoplasm. Responsible for the release of ribosomes from messenger RNA at the termination of protein biosynthesis. May increase the efficiency of translation by recycling ribosomes from one round of translation to another. The polypeptide is Ribosome-recycling factor (Chlorobium phaeovibrioides (strain DSM 265 / 1930) (Prosthecochloris vibrioformis (strain DSM 265))).